We begin with the raw amino-acid sequence, 294 residues long: Phenylalanine-4-hydroxylase (294 aa).

The segment at 1–20 (MSGDGLSNGPPPGARPDWTI) is disordered. Fe cation-binding residues include His-129, His-134, and Glu-175.

This sequence belongs to the biopterin-dependent aromatic amino acid hydroxylase family. Fe(2+) is required as a cofactor.

It carries out the reaction (6R)-L-erythro-5,6,7,8-tetrahydrobiopterin + L-phenylalanine + O2 = (4aS,6R)-4a-hydroxy-L-erythro-5,6,7,8-tetrahydrobiopterin + L-tyrosine. It functions in the pathway amino-acid degradation; L-phenylalanine degradation; acetoacetate and fumarate from L-phenylalanine: step 1/6. The polypeptide is Phenylalanine-4-hydroxylase (phhA) (Caulobacter vibrioides (strain ATCC 19089 / CIP 103742 / CB 15) (Caulobacter crescentus)).